The following is an 822-amino-acid chain: Anaphase-promoting complex subunit 2 (822 aa).

A phosphoserine mark is found at S218, S314, S470, S534, and S697. The segment at 450–495 (GDLAVELSKTDPASLETGQDSEDDSGEPEDWVPDPVDADPGKSSSK) is disordered. Acidic residues predominate over residues 468–481 (QDSEDDSGEPEDWV). The interval 502 to 700 (ISLLVSIYGS…LLRRRMSVWL (199 aa)) is cullin homology. Y810 carries the post-translational modification Phosphotyrosine.

Belongs to the cullin family. The mammalian APC/C is composed at least of 14 distinct subunits ANAPC1, ANAPC2, CDC27/APC3, ANAPC4, ANAPC5, CDC16/APC6, ANAPC7, CDC23/APC8, ANAPC10, ANAPC11, CDC26/APC12, ANAPC13, ANAPC15 and ANAPC16 that assemble into a complex of at least 19 chains with a combined molecular mass of around 1.2 MDa; APC/C interacts with FZR1 and FBXO5. In the context of the APC/C complex, directly interacts with UBE2C and UBE2S. Interacts (via cullin domain) with ANAPC11 and with UBCH10. Interacts with NEUROD2. Interacts with FBXO43; the interaction is direct.

It participates in protein modification; protein ubiquitination. In terms of biological role, together with the RING-H2 protein ANAPC11, constitutes the catalytic component of the anaphase promoting complex/cyclosome (APC/C), a cell cycle-regulated E3 ubiquitin ligase that controls progression through mitosis and the G1 phase of the cell cycle. The APC/C complex acts by mediating ubiquitination and subsequent degradation of target proteins: it mainly mediates the formation of 'Lys-11'-linked polyubiquitin chains and, to a lower extent, the formation of 'Lys-48'- and 'Lys-63'-linked polyubiquitin chains. The APC/C complex catalyzes assembly of branched 'Lys-11'-/'Lys-48'-linked branched ubiquitin chains on target proteins. The CDC20-APC/C complex positively regulates the formation of synaptic vesicle clustering at active zone to the presynaptic membrane in postmitotic neurons. CDC20-APC/C-induced degradation of NEUROD2 drives presynaptic differentiation. This is Anaphase-promoting complex subunit 2 (ANAPC2) from Homo sapiens (Human).